The chain runs to 212 residues: Large ribosomal subunit protein uL4 (212 aa).

Belongs to the universal ribosomal protein uL4 family. As to quaternary structure, part of the 50S ribosomal subunit.

In terms of biological role, one of the primary rRNA binding proteins, this protein initially binds near the 5'-end of the 23S rRNA. It is important during the early stages of 50S assembly. It makes multiple contacts with different domains of the 23S rRNA in the assembled 50S subunit and ribosome. Its function is as follows. Forms part of the polypeptide exit tunnel. The polypeptide is Large ribosomal subunit protein uL4 (Caulobacter sp. (strain K31)).